The following is a 98-amino-acid chain: Co-chaperonin GroES (98 aa).

The protein belongs to the GroES chaperonin family. Heptamer of 7 subunits arranged in a ring. Interacts with the chaperonin GroEL.

Its subcellular location is the cytoplasm. In terms of biological role, together with the chaperonin GroEL, plays an essential role in assisting protein folding. The GroEL-GroES system forms a nano-cage that allows encapsulation of the non-native substrate proteins and provides a physical environment optimized to promote and accelerate protein folding. GroES binds to the apical surface of the GroEL ring, thereby capping the opening of the GroEL channel. This chain is Co-chaperonin GroES, found in Clavibacter michiganensis subsp. michiganensis (strain NCPPB 382).